Reading from the N-terminus, the 666-residue chain is Probable cytochrome c oxidase subunit 1 (666 aa).

The next 2 helical transmembrane spans lie at Ile16–Val36 and Ile57–Ile77. A heme b-binding site is contributed by His105. Transmembrane regions (helical) follow at residues Ile108–Leu128, Ser142–Gly162, Ser192–Leu212, Ser234–Leu254, Leu277–Phe297, Met315–Phe335, Ile346–Leu366, Met380–Val400, Met413–Ala433, Phe456–Leu476, Trp493–Met513, Ser591–His611, and Ile612–Trp632. Cu cation-binding residues include His283, Tyr287, His332, and His333. A cross-link (1'-histidyl-3'-tyrosine (His-Tyr)) is located at residues His283 to Tyr287. Residues His418 and His420 each coordinate heme b.

Belongs to the heme-copper respiratory oxidase family.

It is found in the cell membrane. It carries out the reaction 4 Fe(II)-[cytochrome c] + O2 + 8 H(+)(in) = 4 Fe(III)-[cytochrome c] + 2 H2O + 4 H(+)(out). The protein operates within energy metabolism; oxidative phosphorylation. This is Probable cytochrome c oxidase subunit 1 from Bradyrhizobium diazoefficiens (strain JCM 10833 / BCRC 13528 / IAM 13628 / NBRC 14792 / USDA 110).